The sequence spans 325 residues: Acetyl-coenzyme A carboxylase carboxyl transferase subunit alpha (325 aa).

Positions 35-292 (EIEKLEARLA…DRVLRRSLKQ (258 aa)) constitute a CoA carboxyltransferase C-terminal domain.

The protein belongs to the AccA family. Acetyl-CoA carboxylase is a heterohexamer composed of biotin carboxyl carrier protein (AccB), biotin carboxylase (AccC) and two subunits each of ACCase subunit alpha (AccA) and ACCase subunit beta (AccD).

The protein resides in the cytoplasm. The enzyme catalyses N(6)-carboxybiotinyl-L-lysyl-[protein] + acetyl-CoA = N(6)-biotinyl-L-lysyl-[protein] + malonyl-CoA. The protein operates within lipid metabolism; malonyl-CoA biosynthesis; malonyl-CoA from acetyl-CoA: step 1/1. Component of the acetyl coenzyme A carboxylase (ACC) complex. First, biotin carboxylase catalyzes the carboxylation of biotin on its carrier protein (BCCP) and then the CO(2) group is transferred by the carboxyltransferase to acetyl-CoA to form malonyl-CoA. The sequence is that of Acetyl-coenzyme A carboxylase carboxyl transferase subunit alpha from Geobacillus kaustophilus (strain HTA426).